Consider the following 435-residue polypeptide: D-amino acid dehydrogenase (435 aa).

An FAD-binding site is contributed by 3–17 (VLILGSGVIGTTSAW).

The protein belongs to the DadA oxidoreductase family. Requires FAD as cofactor.

The catalysed reaction is a D-alpha-amino acid + A + H2O = a 2-oxocarboxylate + AH2 + NH4(+). The protein operates within amino-acid degradation; D-alanine degradation; NH(3) and pyruvate from D-alanine: step 1/1. In terms of biological role, oxidative deamination of D-amino acids. This is D-amino acid dehydrogenase from Xylella fastidiosa (strain M12).